The sequence spans 308 residues: MESLQRLLQGARMGTGMMGDQPLVDNSECVYISSLALLKMLRHGRHGTPMEVMGLMLGEFVDDFTVRVVDVFAMPQSGTGVSVEAVDPVFQKNMMDMLKQTGRPEMVVGWYHSHPGFGCWLSSVDINTQQSFEQLTPRAVAVVVDPIQSVKGKVVIDAFRLINPSTLMMGQEPRQTTSNLGHINKPSIQALIHGLGRHYYSLRINYKKTELEEIMLLNLHKQPWAHGLLLENFNSAAEKNHASIDKMKSLSEQYTERVQNEVTLSPEQLRIQYVGKQDPKKHLDAEVQKCIDNNISSMLACMLDSVAF.

In terms of domain architecture, MPN spans 30–165 (VYISSLALLK…IDAFRLINPS (136 aa)). Zn(2+) is bound by residues H112, H114, and D125. The JAMM motif signature appears at 112–125 (HSHPGFGCWLSSVD).

It belongs to the peptidase M67A family. The 26S proteasome is composed of a core protease, known as the 20S proteasome, capped at one or both ends by the 19S regulatory complex (RC). The RC is composed of at least 18 different subunits in two subcomplexes, the base and the lid, which form the portions proximal and distal to the 20S proteolytic core, respectively.

In terms of biological role, acts as a regulatory subunit of the 26 proteasome which is involved in the ATP-dependent degradation of ubiquitinated proteins. Transcription factor pap1 is controlled by the functional interaction between the positive regulator pad1 and negative regulator crm1. Both these proteins are also essential for cell viability and for the maintenance of chromosome structure. Pad1 is also responsible for resistance to staurosporine, and other drugs such as cycloheximide and caffeine. This chain is 26S proteasome regulatory subunit rpn11 (rpn11), found in Schizosaccharomyces pombe (strain 972 / ATCC 24843) (Fission yeast).